We begin with the raw amino-acid sequence, 196 residues long: Putative NADH dehydrogenase/NAD(P)H nitroreductase Rpal_4764 (196 aa).

This sequence belongs to the nitroreductase family. HadB/RutE subfamily. The cofactor is FMN.

In Rhodopseudomonas palustris (strain TIE-1), this protein is Putative NADH dehydrogenase/NAD(P)H nitroreductase Rpal_4764.